We begin with the raw amino-acid sequence, 134 residues long: Profilin-2 (134 aa).

Phosphothreonine is present on Thr-114.

It belongs to the profilin family. In terms of assembly, occurs in many kinds of cells as a complex with monomeric actin in a 1:1 ratio. In terms of processing, phosphorylated by MAP kinases.

It is found in the cytoplasm. The protein localises to the cytoskeleton. In terms of biological role, binds to actin and affects the structure of the cytoskeleton. At high concentrations, profilin prevents the polymerization of actin, whereas it enhances it at low concentrations. By binding to PIP2, it inhibits the formation of IP3 and DG. The sequence is that of Profilin-2 (PRO2) from Nicotiana tabacum (Common tobacco).